The primary structure comprises 337 residues: Lipoyl synthase (337 aa).

[4Fe-4S] cluster contacts are provided by C81, C86, C92, C107, C111, C114, and S323. The Radical SAM core domain maps to F93–S312.

The protein belongs to the radical SAM superfamily. Lipoyl synthase family. The cofactor is [4Fe-4S] cluster.

It is found in the cytoplasm. It catalyses the reaction [[Fe-S] cluster scaffold protein carrying a second [4Fe-4S](2+) cluster] + N(6)-octanoyl-L-lysyl-[protein] + 2 oxidized [2Fe-2S]-[ferredoxin] + 2 S-adenosyl-L-methionine + 4 H(+) = [[Fe-S] cluster scaffold protein] + N(6)-[(R)-dihydrolipoyl]-L-lysyl-[protein] + 4 Fe(3+) + 2 hydrogen sulfide + 2 5'-deoxyadenosine + 2 L-methionine + 2 reduced [2Fe-2S]-[ferredoxin]. The protein operates within protein modification; protein lipoylation via endogenous pathway; protein N(6)-(lipoyl)lysine from octanoyl-[acyl-carrier-protein]: step 2/2. Its function is as follows. Catalyzes the radical-mediated insertion of two sulfur atoms into the C-6 and C-8 positions of the octanoyl moiety bound to the lipoyl domains of lipoate-dependent enzymes, thereby converting the octanoylated domains into lipoylated derivatives. The protein is Lipoyl synthase of Xanthomonas oryzae pv. oryzae (strain MAFF 311018).